The sequence spans 70 residues: MSKQKKFEENLAELETIVQSLENGEIALEDAITAFQKGMVLSKELQATLDKAEKTLVKVMQEDGTESDFE.

This sequence belongs to the XseB family. Heterooligomer composed of large and small subunits.

Its subcellular location is the cytoplasm. It catalyses the reaction Exonucleolytic cleavage in either 5'- to 3'- or 3'- to 5'-direction to yield nucleoside 5'-phosphates.. Its function is as follows. Bidirectionally degrades single-stranded DNA into large acid-insoluble oligonucleotides, which are then degraded further into small acid-soluble oligonucleotides. This is Exodeoxyribonuclease 7 small subunit from Streptococcus pneumoniae serotype 2 (strain D39 / NCTC 7466).